An 869-amino-acid chain; its full sequence is MDFPSSLRPALFLTGPLGLSDVPDLSFMCSWRDALTLPEAQPQNSENGALHVTKDLLWEPATPGPLPMLPPLIDPWDPGLTARDLLFRGGCRYRKRPRVVLDVTEQISRFLLDHGDVAFAPLGKLMLENFKLEGAGSRTKKKTVVSVKKLLQDLGGHQPWGCPWAYLSNRQRRFSILGGPILGTSVASHLAELLHEELVLRWEQLLLDEACTGGALAWVPGRTPQFGQLVYPAGGAQDRLHFQEVVLTPGDNPQFLGKPGRIQLQGPVRQVVTCTVQGESKALIYTFLPHWLTCYLTPGPFHPSSALLAVRSDYHCAVWKFGKQWQPTLLQAMQVEKGATGISLSPHLPGELAICSRSGAVCLWSPEDGLRQIYRDPETLVFRDSSSWRWADFTAHPRVLTVGDRTGVKMLDTQGPPGCGLLLFRLGAEASCQKGERVLLTQYLGHSSPKCLPPTLHLVCTQFSLYLVDERLPLVPMLKWNHGLPSPLLLARLLPPPRPSCVQPLLLGGQGGQLQLLHLAGEGASVPRLAGPPQSLPSRIDSLPAFPLLEPKIQWRLQERLKAPTIGLAAVVPPLPSAPTPGLVLFQLSAAGDVFYQQLRPQVDSSLRRDAGPPGDTQPDCHAPTASWTSQDTAGCSQWLKALLKVPLAPPVWTAPTFTHRQMLGSTELRREEEEGQRLGVLRKAMARGQLLLQRDLGSLPAAEPPPAPESGLEDKLSERLGEAWAGRGAAWWERQQGRTSEPGRQTRRPKRRTQLSSSFSLSGHVDPSEDTSSPHSPEWPPADALPLPPTTPPSQELTPDACAQGVPSEQRQMLRDYMAKLPPQRDTPGCATTPPHSQASSVRATRSQQHTPVLSSSQPLRKKPRMGF.

2 disordered regions span residues 605 to 629 (SSLR…ASWT) and 729 to 869 (GAAW…RMGF). The residue at position 834 (threonine 834) is a Phosphothreonine. The span at 835-860 (PPHSQASSVRATRSQQHTPVLSSSQP) shows a compositional bias: polar residues. Serine 848 carries the post-translational modification Phosphoserine.

Component of the transcription factor SL1/TIF-IB complex, composed of TBP and at least TAF1A, TAF1B, TAF1C and TAF1D. In the complex interacts directly with TBP, TAF1A and TAF1B. Interaction of the SL1/TIF-IB subunits with TBP excludes interaction of TBP with the transcription factor IID (TFIID) subunits. Interacts with MYC and RRN3. Interacts with p53/TP53; the interaction prevents the association of SL1/TIF-IB with UBTF and represses RNA polymerase I transcription. Part of Pol I pre-initiation complex (PIC), in which Pol I core assembles with RRN3 and promoter-bound UTBF and SL1/TIF-IB complex.

It localises to the nucleus. It is found in the nucleolus. Functionally, component of the transcription factor SL1/TIF-IB complex, which is involved in the assembly of the PIC (pre-initiation complex) during RNA polymerase I-dependent transcription. The rate of PIC formation probably is primarily dependent on the rate of association of SL1/TIF-IB with the rDNA promoter. SL1/TIF-IB is involved in stabilization of nucleolar transcription factor 1/UBTF on rDNA. Formation of SL1/TIF-IB excludes the association of TBP with TFIID subunits. Recruits RNA polymerase I to the rRNA gene promoter via interaction with RRN3. In Homo sapiens (Human), this protein is TATA box-binding protein-associated factor RNA polymerase I subunit C (TAF1C).